A 675-amino-acid polypeptide reads, in one-letter code: MQESGGSSGQGGPSLCLEWKQLNYYVPDQEQSNYSFWNECRKKRELRILQDASGHMKTGDLIAILGGSGAGKTTLLAAISQRLRGNLTGDVVLNGMAMERHQMTRISSFLPQFEINVKTFTAYEHLYFMSHFKMHRRTTKAEKRQRVADLLLAVGLRDAAHTRIQQLSGGERKRLSLAEELITDPIFLFCDEPTTGLDSFSAYSVIKTLRHLCTRRRIAKHSLNQVYGEDSFETPSGESSASGSGSKSIEMEVVAESHESLLQTMRELPALGVLSNSPNGTHKKAAICSIHQPTSDIFELFTHIILMDGGRIVYQGRTEQAAKFFTDLGYELPLNCNPADFYLKTLADKEGKENAGAVLRAKYEHETDGLYSGSWLLARSYSGDYLKHVQNFKKIRWIYQVYLLMVRFMTEDLRNIRSGLIAFGFFMITAVTLSLMYSGIGGLTQRTVQDVGGSIFMLSNEMIFTFSYGVTYIFPAALPIIRREVGEGTYSLSAYYVALVLSFVPVAFFKGYVFLSVIYASIYYTRGFLLYLSMGFLMSLSAVAAVGYGVFLSSLFESDKMASECAAPFDLIFLIFGGTYMNVDTVPGLKYLSLFFYSNEALMYKFWIDIDNIDCPVNEDHPCIKTGVEVLQQGSYRNADYTYWLDCFSLVVVAVIFHIVSFGLVRRYIHRSGYY.

The Cytoplasmic segment spans residues 1 to 419 (MQESGGSSGQ…TEDLRNIRSG (419 aa)). Residues 34–261 (YSFWNECRKK…EVVAESHESL (228 aa)) form the ABC transporter domain. Position 66-73 (66-73 (GGSGAGKT)) interacts with ATP. Residues 229 to 249 (EDSFETPSGESSASGSGSKSI) form a disordered region. Over residues 236 to 248 (SGESSASGSGSKS) the composition is skewed to low complexity. Residues 420 to 440 (LIAFGFFMITAVTLSLMYSGI) traverse the membrane as a helical segment. The Extracellular segment spans residues 441 to 460 (GGLTQRTVQDVGGSIFMLSN). Residues 461-481 (EMIFTFSYGVTYIFPAALPII) traverse the membrane as a helical segment. The Cytoplasmic segment spans residues 482–497 (RREVGEGTYSLSAYYV). The chain crosses the membrane as a helical span at residues 498–518 (ALVLSFVPVAFFKGYVFLSVI). Over 519-531 (YASIYYTRGFLLY) the chain is Extracellular. Residues 532–552 (LSMGFLMSLSAVAAVGYGVFL) form a helical membrane-spanning segment. The Cytoplasmic portion of the chain corresponds to 553–568 (SSLFESDKMASECAAP). The helical transmembrane segment at 569-589 (FDLIFLIFGGTYMNVDTVPGL) threads the bilayer. Topologically, residues 590-644 (KYLSLFFYSNEALMYKFWIDIDNIDCPVNEDHPCIKTGVEVLQQGSYRNADYTYW) are extracellular. The helical transmembrane segment at 645–665 (LDCFSLVVVAVIFHIVSFGLV) threads the bilayer. Over 666–675 (RRYIHRSGYY) the chain is Cytoplasmic.

The protein belongs to the ABC transporter superfamily. ABCG family. Eye pigment precursor importer (TC 3.A.1.204) subfamily. May form a heterodimer with w/white.

It localises to the membrane. The enzyme catalyses guanine(out) + ATP + H2O = guanine(in) + ADP + phosphate + H(+). It catalyses the reaction riboflavin(in) + ATP + H2O = riboflavin(out) + ADP + phosphate + H(+). It carries out the reaction (6S)-5,6,7,8-tetrahydrofolate(out) + ATP + H2O = (6S)-5,6,7,8-tetrahydrofolate(in) + ADP + phosphate + H(+). In terms of biological role, ATP-dependent transporter of the ATP-binding cassette (ABC) family which transports various molecules including bioamines, neurotransmitters and metabolic intermediates. In the eye and probably in association with w/white, required for the transport of the eye red pigment precursor, guanine, into pigment cell granules. In Malpighian tubules, involved in guanine uptake. Probably in association with w/white, involved in aging-induced intestinal stem cell proliferation in the midgut by regulating tetrahydrofolate transport. In Drosophila melanogaster (Fruit fly), this protein is Protein brown.